The sequence spans 62 residues: Photosystem II reaction center protein Z (62 aa).

The next 2 membrane-spanning stretches (helical) occupy residues 8–28 (AVFA…VVFA) and 41–61 (FSGT…NSLI).

The protein belongs to the PsbZ family. PSII is composed of 1 copy each of membrane proteins PsbA, PsbB, PsbC, PsbD, PsbE, PsbF, PsbH, PsbI, PsbJ, PsbK, PsbL, PsbM, PsbT, PsbY, PsbZ, Psb30/Ycf12, at least 3 peripheral proteins of the oxygen-evolving complex and a large number of cofactors. It forms dimeric complexes.

Its subcellular location is the plastid. It is found in the chloroplast thylakoid membrane. May control the interaction of photosystem II (PSII) cores with the light-harvesting antenna, regulates electron flow through the 2 photosystem reaction centers. PSII is a light-driven water plastoquinone oxidoreductase, using light energy to abstract electrons from H(2)O, generating a proton gradient subsequently used for ATP formation. The sequence is that of Photosystem II reaction center protein Z from Panax ginseng (Korean ginseng).